Reading from the N-terminus, the 215-residue chain is Adenylate kinase (215 aa).

10–15 is an ATP binding site; the sequence is GAGKGT. Positions 30–59 are NMP; sequence STGDMLRAAVKAGTELGLKAKSVMDAGGLV. AMP contacts are provided by residues T31, R36, 57-59, 85-88, and Q92; these read GLV and GFPR. The LID stretch occupies residues 122 to 159; sequence GRRVHPASGRVYHTEYNPPKVAGKDDVSGEELVQREDD. Residues R123 and 132–133 contribute to the ATP site; that span reads VY. AMP-binding residues include R156 and R167. G201 provides a ligand contact to ATP.

Belongs to the adenylate kinase family. As to quaternary structure, monomer.

The protein localises to the cytoplasm. The enzyme catalyses AMP + ATP = 2 ADP. The protein operates within purine metabolism; AMP biosynthesis via salvage pathway; AMP from ADP: step 1/1. Functionally, catalyzes the reversible transfer of the terminal phosphate group between ATP and AMP. Plays an important role in cellular energy homeostasis and in adenine nucleotide metabolism. In Ectopseudomonas mendocina (strain ymp) (Pseudomonas mendocina), this protein is Adenylate kinase.